The chain runs to 576 residues: Plant intracellular Ras-group-related LRR protein 4 (576 aa).

Positions 130–151 (AAPAAATTTTSTAAAGSSSSSA) are enriched in low complexity. The interval 130–181 (AAPAAATTTTSTAAAGSSSSSAVGNAERHASSGTNGFTASRVAGTSTSTGRV) is disordered. The segment covering 160-180 (SSGTNGFTASRVAGTSTSTGR) has biased composition (polar residues). LRR repeat units follow at residues 272-295 (LTGL…IGKL), 296-318 (FSLA…IGDL), 320-341 (SLIY…IGRL), 342-364 (LNLE…IGSL), 366-387 (RLKK…IGHC), 389-410 (SLVE…VGKL), 411-433 (EPLE…MASL), 434-456 (TKLK…FCFA), 458-481 (SLIK…IGNL), 482-503 (EMLE…SFGN), and 505-527 (KHLR…IALK). Positions 528 to 535 (GAQAVVQY) match the GVYW; degenerate motif.

Belongs to the SHOC2 family. As to expression, widely expressed.

In terms of biological role, leucine-rich repeat protein that likely mediates protein interactions, possibly in the context of signal transduction. In Oryza sativa subsp. japonica (Rice), this protein is Plant intracellular Ras-group-related LRR protein 4 (IRL4).